Consider the following 264-residue polypeptide: 3'-5' ssDNA/RNA exonuclease TatD (264 aa).

Residues glutamate 92, histidine 128, and histidine 153 each coordinate a divalent metal cation.

Belongs to the metallo-dependent hydrolases superfamily. TatD-type hydrolase family. TatD subfamily. Monomer. The cofactor is Mg(2+).

It localises to the cytoplasm. Its function is as follows. 3'-5' exonuclease that prefers single-stranded DNA and RNA. May play a role in the H(2)O(2)-induced DNA damage repair. In Musicola paradisiaca (strain Ech703) (Dickeya paradisiaca), this protein is 3'-5' ssDNA/RNA exonuclease TatD.